Reading from the N-terminus, the 1014-residue chain is Regulator of telomere elongation helicase 1 homolog (1014 aa).

Residues 7–308 (RGVDVDFPYD…NSADKQFDPE (302 aa)) enclose the Helicase ATP-binding domain. An ATP-binding site is contributed by 42 to 49 (SPTGTGKT). Gly residues predominate over residues 70–85 (GGGGGGGGGGGGGGGS). A disordered region spans residues 70-106 (GGGGGGGGGGGGGGGSQQPPYGSQPSGSQHSGGSASQ). Low complexity predominate over residues 86–106 (QQPPYGSQPSGSQHSGGSASQ). Residues cysteine 149, cysteine 170, cysteine 175, and cysteine 211 each coordinate [4Fe-4S] cluster. Positions 255–258 (DEAH) match the DEAH box motif. Residues 906–930 (SSKKSNITHAPGNSGAIHEKSGGQE) form a disordered region.

Belongs to the helicase family. RAD3/XPD subfamily.

Its subcellular location is the nucleus. The enzyme catalyses ATP + H2O = ADP + phosphate + H(+). Functionally, a probable ATP-dependent DNA helicase implicated in DNA replication, DNA repair and the maintenance of genomic stability. Acts as an anti-recombinase to counteract toxic recombination and limit crossover during meiosis. Regulates meiotic recombination and crossover homeostasis by physically dissociating strand invasion events and thereby promotes noncrossover repair by meiotic synthesis dependent strand annealing (SDSA) as well as disassembly of D loop recombination intermediates. In Oryza sativa subsp. japonica (Rice), this protein is Regulator of telomere elongation helicase 1 homolog.